Here is a 1082-residue protein sequence, read N- to C-terminus: SURP and G-patch domain-containing protein 2 (1082 aa).

The residue at position 7 (Thr7) is a Phosphothreonine. The tract at residues 65–97 (LSGSVAHSRDAGREGLRSDVFPGPSFRSSNPSI) is disordered. Over residues 71–81 (HSRDAGREGLR) the composition is skewed to basic and acidic residues. Phosphoserine is present on residues Ser96 and Ser224. Lys228 is covalently cross-linked (Glycyl lysine isopeptide (Lys-Gly) (interchain with G-Cter in SUMO2)). Phosphothreonine is present on Thr275. Ser277 carries the post-translational modification Phosphoserine. Lys305 participates in a covalent cross-link: Glycyl lysine isopeptide (Lys-Gly) (interchain with G-Cter in SUMO2). Ser315, Ser573, and Ser603 each carry phosphoserine. The stretch at 590–633 (IDQLVKRVIEGSLSPKERTLLKEDPAYWFLSDENSLEYKYYKLK) is one SURP motif 1 repeat. Lys650 participates in a covalent cross-link: Glycyl lysine isopeptide (Lys-Gly) (interchain with G-Cter in SUMO2). The interval 694 to 779 (RRATTGTQTL…QTSSPCPSAD (86 aa)) is disordered. Over residues 697–708 (TTGTQTLLSSGT) the composition is skewed to low complexity. Positions 727 to 738 (LPDRNDAAKDCP) are enriched in basic and acidic residues. A phosphoserine mark is found at Ser754 and Ser757. Residues 787–830 (TAEKLARFVAQVGPEIEQFSIENSTDNPDLWFLHDQNSSAFKFY) form an SURP motif 2 repeat. Disordered regions lie at residues 849 to 930 (NLHT…EAAE), 982 to 1002 (RIAY…PKDL), and 1030 to 1061 (LGSL…EHKE). Ser863 carries the post-translational modification Phosphoserine. Composition is skewed to acidic residues over residues 868 to 877 (MEGEAEFEDE) and 885 to 904 (LESP…DGGE). Residues 990–999 (GRPMSKKKKP) show a composition bias toward basic residues. A Nuclear localization signal motif is present at residues 995–1000 (KKKKPK). Residues 1011-1057 (DKNLGFQMLQKMGWKEGHGLGSLGKGIREPVSVGTPSEGEGLGADGQ) form the G-patch domain.

As to expression, detected in adult testis, and in fetal brain and kidney.

It is found in the nucleus. In terms of biological role, may play a role in mRNA splicing. The protein is SURP and G-patch domain-containing protein 2 (SUGP2) of Homo sapiens (Human).